We begin with the raw amino-acid sequence, 273 residues long: Putative pyruvate, phosphate dikinase regulatory protein (273 aa).

153-160 (GISRTSKT) is a binding site for ADP.

It belongs to the pyruvate, phosphate/water dikinase regulatory protein family. PDRP subfamily.

It catalyses the reaction N(tele)-phospho-L-histidyl/L-threonyl-[pyruvate, phosphate dikinase] + ADP = N(tele)-phospho-L-histidyl/O-phospho-L-threonyl-[pyruvate, phosphate dikinase] + AMP + H(+). The catalysed reaction is N(tele)-phospho-L-histidyl/O-phospho-L-threonyl-[pyruvate, phosphate dikinase] + phosphate + H(+) = N(tele)-phospho-L-histidyl/L-threonyl-[pyruvate, phosphate dikinase] + diphosphate. In terms of biological role, bifunctional serine/threonine kinase and phosphorylase involved in the regulation of the pyruvate, phosphate dikinase (PPDK) by catalyzing its phosphorylation/dephosphorylation. In Rhizobium leguminosarum bv. trifolii (strain WSM2304), this protein is Putative pyruvate, phosphate dikinase regulatory protein.